Consider the following 433-residue polypeptide: Pectinesterase B (433 aa).

Positions 1-21 (MSLTHYSGLAAAVSMSLILTA) are cleaved as a signal peptide. Cysteine 22 carries the N-palmitoyl cysteine lipid modification. Cysteine 22 is lipidated: S-diacylglycerol cysteine. At 22–433 (CGGQTPNSAR…EYNTQVLLHE (412 aa)) the chain is on the periplasmic side. Substrate contacts are provided by threonine 202 and glutamine 236. The active-site Proton donor is the aspartate 259. Aspartate 292 serves as the catalytic Nucleophile. Arginine 356 and tryptophan 358 together coordinate substrate.

It belongs to the pectinesterase family.

The protein resides in the cell outer membrane. The enzyme catalyses [(1-&gt;4)-alpha-D-galacturonosyl methyl ester](n) + n H2O = [(1-&gt;4)-alpha-D-galacturonosyl](n) + n methanol + n H(+). It functions in the pathway glycan metabolism; pectin degradation; 2-dehydro-3-deoxy-D-gluconate from pectin: step 1/5. Functionally, probably involved in the degradation of methylated oligogalacturonides present in the periplasm. More active on methylated oligogalacturides than on pectin. The protein is Pectinesterase B of Dickeya dadantii (strain 3937) (Erwinia chrysanthemi (strain 3937)).